A 641-amino-acid chain; its full sequence is Chaperone protein DnaK (641 aa).

A Phosphothreonine; by autocatalysis modification is found at threonine 200. Residues 605–623 (AAEQGGSADAASGNAQASK) are compositionally biased toward low complexity. Residues 605 to 627 (AAEQGGSADAASGNAQASKAADD) are disordered.

It belongs to the heat shock protein 70 family.

Functionally, acts as a chaperone. The chain is Chaperone protein DnaK from Xanthomonas oryzae pv. oryzae (strain MAFF 311018).